Reading from the N-terminus, the 239-residue chain is Adapter protein MecA (239 aa).

A compositionally biased stretch (basic and acidic residues) spans 118-128 (EQRTKEKEAQG). Positions 118–137 (EQRTKEKEAQGSKRQKSSAR) are disordered.

Belongs to the MecA family. In terms of assembly, homodimer.

In terms of biological role, enables the recognition and targeting of unfolded and aggregated proteins to the ClpC protease or to other proteins involved in proteolysis. The protein is Adapter protein MecA of Staphylococcus aureus (strain bovine RF122 / ET3-1).